Here is a 251-residue protein sequence, read N- to C-terminus: Aspartate/glutamate leucyltransferase (251 aa).

Belongs to the R-transferase family. Bpt subfamily.

It is found in the cytoplasm. The catalysed reaction is N-terminal L-glutamyl-[protein] + L-leucyl-tRNA(Leu) = N-terminal L-leucyl-L-glutamyl-[protein] + tRNA(Leu) + H(+). It carries out the reaction N-terminal L-aspartyl-[protein] + L-leucyl-tRNA(Leu) = N-terminal L-leucyl-L-aspartyl-[protein] + tRNA(Leu) + H(+). Functions in the N-end rule pathway of protein degradation where it conjugates Leu from its aminoacyl-tRNA to the N-termini of proteins containing an N-terminal aspartate or glutamate. The sequence is that of Aspartate/glutamate leucyltransferase from Stenotrophomonas maltophilia (strain R551-3).